Here is a 339-residue protein sequence, read N- to C-terminus: Hairy/enhancer-of-split related with YRPW motif protein 2 (339 aa).

The interval 1-52 (MKRPCEETTSESDLDETIDVGSENNYPGHATSSVMRSNSPTTTSQIMARKKR) is disordered. Positions 8-18 (TTSESDLDETI) are enriched in acidic residues. Polar residues predominate over residues 22–46 (SENNYPGHATSSVMRSNSPTTTSQI). The tract at residues 47 to 116 (MARKKRRGII…GGKGYFDAHA (70 aa)) is transcriptional repression and interaction with NCOR1 and SIN3A. The bHLH domain maps to 48–103 (ARKKRRGIIEKRRRDRINNSLSELRRLVPTAFEKQGSAKLEKAEILQMTVDHLKML). An Orange domain is found at 122–157 (MSIGFRECLTEVARYLSSVEGLDPSDPLRVRLVSHL). The disordered stretch occupies residues 310–339 (SVSAASSPQQTSTGTNNKPYQPWGTEVGAF). Residues 318 to 328 (QQTSTGTNNKP) show a composition bias toward polar residues. Residues 329 to 332 (YQPW) carry the YQPW motif motif.

This sequence belongs to the HEY family. As to quaternary structure, may self-associate. Interacts with ARNT. Interacts with GATA4, GATA6, HES1 and HEYL. Interacts with HDAC1, NCOR1 and SIN3A. Highly expressed in the aorta, lower expression detected in the heart, brain, kidney, lung, muscle, ovary and testis.

It is found in the nucleus. In terms of biological role, transcriptional repressor which functions as a downstream effector of Notch signaling in cardiovascular development. Specifically required for the Notch-induced endocardial epithelial to mesenchymal transition, which is itself criticial for cardiac valve and septum development. May be required in conjunction with HEY1 to specify arterial cell fate or identity. Promotes maintenance of neuronal precursor cells and glial versus neuronal fate specification. Binds preferentially to the canonical E box sequence 5'-CACGTG-3'. Represses transcription by the cardiac transcriptional activators GATA4 and GATA6 and by the neuronal bHLH factors ASCL1/MASH1 and NEUROD4/MATH3. In Mus musculus (Mouse), this protein is Hairy/enhancer-of-split related with YRPW motif protein 2 (Hey2).